The chain runs to 312 residues: Olfactory receptor 2H2 (312 aa).

Residues 1–23 are Extracellular-facing; the sequence is MVNQSSTPGFLLLGFSEHPGLER. N-linked (GlcNAc...) asparagine glycosylation is present at Asn-3. Residues 24-47 traverse the membrane as a helical segment; that stretch reads TLFVVVLTSYLLTLVGNTLIILLS. The Cytoplasmic portion of the chain corresponds to 48-55; the sequence is ALDPKLHS. The chain crosses the membrane as a helical span at residues 56–77; the sequence is PMYFFLSNLSFLDLCFTTSCVP. Residues 78–98 are Extracellular-facing; the sequence is QMLVNLWGPKKTISFLDCSVQ. Residues Cys-95 and Cys-187 are joined by a disulfide bond. A helical transmembrane segment spans residues 99–118; it reads IFIFLSLGTTECILLTVMAF. Residues 119-137 are Cytoplasmic-facing; it reads DRYVAVCQPLHYATIIHPR. Residues 138 to 156 form a helical membrane-spanning segment; it reads LCWQLASVAWVIGLVESVV. Topologically, residues 157–193 are extracellular; sequence QTPSTLHLPFCPDRQVDDFVCEVPALIRLSCEDTSYN. Residues 194–217 form a helical membrane-spanning segment; it reads EIQVAVASVFILVVPLSLILVSYG. The Cytoplasmic segment spans residues 218–234; the sequence is AITWAVLRINSAKGRRK. Residues 235-257 form a helical membrane-spanning segment; sequence AFGTCSSHLTVVTLFYSSVIAVY. The Extracellular segment spans residues 258–270; the sequence is LQPKNPYAQERGK. Residues 271–290 form a helical membrane-spanning segment; it reads FFGLFYAVGTPSLNPLIYTL. The Cytoplasmic segment spans residues 291-312; sequence RNKEVTRAFRRLLGKEMGLTQS.

The protein belongs to the G-protein coupled receptor 1 family.

The protein resides in the cell membrane. Functionally, odorant receptor. The chain is Olfactory receptor 2H2 (OR2H2) from Homo sapiens (Human).